Reading from the N-terminus, the 251-residue chain is Protein FAM216A (251 aa).

Residues 1 to 41 (MPSRWPGVAGPPALARTEGGEGSAGHSYPQNSKGTGEQHKA) are disordered.

The protein belongs to the FAM216 family.

The protein is Protein FAM216A (Fam216a) of Mus musculus (Mouse).